The chain runs to 1376 residues: Phospholipid-transporting ATPase DRS2 (1376 aa).

Residues 1–10 (MAGRPTGGPQ) show a composition bias toward gly residues. Disordered regions lie at residues 1–151 (MAGR…AAAR) and 180–217 (GYSE…PKRD). Topologically, residues 1 to 306 (MAGRPTGGPQ…QIPGLSPTNR (306 aa)) are cytoplasmic. The span at 40–50 (DLMRTYTRDQE) shows a compositional bias: basic and acidic residues. A compositionally biased stretch (low complexity) spans 85–96 (QSSSSNNNNNNN). Residues 97–115 (VSAPYSRSGRQYSQTSDLG) are compositionally biased toward polar residues. The span at 191-203 (PGGGGGGAGGGGH) shows a compositional bias: gly residues. A helical transmembrane segment spans residues 307–327 (FTTIIPLVAVLMVSAGKELVE). At 328–509 (DYRRKQADAA…KVEKKLNTLV (182 aa)) the chain is on the extracellular side. N-linked (GlcNAc...) asparagine glycosylation is found at Asn-339, Asn-433, and Asn-490. Residues 510 to 530 (LLLVGILMVLSIISTVGDLII) form a helical membrane-spanning segment. Residues 531–559 (RRVEGDAISYLMLDQPDTAGKIAETFFKD) lie on the Cytoplasmic side of the membrane. Residues 560-580 (MVTYWVLFSSLVPISLFVTVE) form a helical membrane-spanning segment. Residues 581–1107 (MVKYWHGILI…VFSGAVIYES (527 aa)) are Extracellular-facing. The active-site 4-aspartylphosphate intermediate is the Asp-625. Residues Asp-625, Lys-626, and Thr-627 each contribute to the ATP site. Asp-625 contributes to the Mg(2+) binding site. Thr-627 provides a ligand contact to Mg(2+). Asn-679 carries an N-linked (GlcNAc...) asparagine glycan. Glu-720 and Phe-761 together coordinate ATP. A glycan (N-linked (GlcNAc...) asparagine) is linked at Asn-762. Positions 763, 766, 784, 817, 818, 898, 899, 900, 991, and 997 each coordinate ATP. Asp-1018 provides a ligand contact to Mg(2+). ATP-binding residues include Asn-1021 and Asp-1022. Asp-1022 serves as a coordination point for Mg(2+). A glycan (N-linked (GlcNAc...) asparagine) is linked at Asn-1083. The helical transmembrane segment at 1108 to 1128 (WTLTFYNVFYTVLPPLALGIL) threads the bilayer. At 1129–1165 (DQFISARLLDRYPQLYSMGQQNQFFRMKVFIEWLLNA) the chain is on the cytoplasmic side. A helical transmembrane segment spans residues 1166–1186 (VYHSIILYVFGELIWHGDLIL). Topologically, residues 1187-1190 (ENGQ) are extracellular. Residues 1191–1211 (IAGHWMWGTALYAPVLLTVLG) form a helical membrane-spanning segment. Lys-1212 is a binding site for a 1,2-diacyl-sn-glycero-3-phospho-(1D-myo-inositol 4-phosphate). The Cytoplasmic portion of the chain corresponds to 1212–1224 (KAGLVTSNWTKYH). The chain crosses the membrane as a helical span at residues 1225 to 1245 (VIAIPGSMAIWWIFIAVYGTV). The Extracellular portion of the chain corresponds to 1246 to 1257 (APMIPFSPEFHG). A helical transmembrane segment spans residues 1258-1278 (IVPKLYSSPIFWLQSFALAIL). Over 1279-1376 (CLLRDFAWKY…TSSRPQGQGT (98 aa)) the chain is Cytoplasmic. Arg-1282, Trp-1286, Lys-1287, Tyr-1298, and His-1299 together coordinate a 1,2-diacyl-sn-glycero-3-phospho-(1D-myo-inositol 4-phosphate).

It belongs to the cation transport ATPase (P-type) (TC 3.A.3) family. Type IV subfamily. It depends on Mg(2+) as a cofactor.

It localises to the cell membrane. The protein resides in the golgi apparatus. The protein localises to the trans-Golgi network membrane. The catalysed reaction is ATP + H2O + phospholipidSide 1 = ADP + phosphate + phospholipidSide 2.. The enzyme catalyses a 1,2-diacyl-sn-glycero-3-phospho-L-serine(out) + ATP + H2O = a 1,2-diacyl-sn-glycero-3-phospho-L-serine(in) + ADP + phosphate + H(+). It carries out the reaction a 1,2-diacyl-sn-glycero-3-phosphoethanolamine(out) + ATP + H2O = a 1,2-diacyl-sn-glycero-3-phosphoethanolamine(in) + ADP + phosphate + H(+). In terms of biological role, catalytic component of a P4-ATPase flippase complex which catalyzes the hydrolysis of ATP coupled to the transport of phosphatidylserine and small amounts of ethanolamine from the lumen to the cytosolic leaflet of the trans-Golgi network and cell membrane and ensures the maintenance of asymmetric distribution of phospholipids. Required for efficient vesicle transport during toxin secretion. The protein is Phospholipid-transporting ATPase DRS2 (DRS2) of Verticillium dahliae (strain VdLs.17 / ATCC MYA-4575 / FGSC 10137) (Verticillium wilt).